The chain runs to 79 residues: WAP four-disulfide core domain protein 10A (79 aa).

Residues 1–21 form the signal peptide; the sequence is MAPQTLLPVLVLCVLLLQAQG. The 46-residue stretch at 34-79 folds into the WAP domain; it reads LSPEIKVCQQQPKLYLCKHLCESHRDCQANNICCSTYCGNVCMSIL. 4 disulfide bridges follow: cysteine 41–cysteine 67, cysteine 50–cysteine 71, cysteine 54–cysteine 66, and cysteine 60–cysteine 75.

The protein resides in the secreted. The protein is WAP four-disulfide core domain protein 10A (WFDC10A) of Homo sapiens (Human).